The primary structure comprises 443 residues: Mitochondrial enolase superfamily member 1 (443 aa).

Residues 24-26 (GSD) and Y34 each bind substrate. Position 148 is a phosphoserine (S148). Substrate is bound at residue K220. K222 acts as the Proton donor/acceptor in catalysis. D250 serves as a coordination point for Mg(2+). Residues N252, E276, E305, 355-357 (HAG), and E386 contribute to the substrate site. Mg(2+) contacts are provided by E276 and E305. H355 is an active-site residue.

The protein belongs to the mandelate racemase/muconate lactonizing enzyme family. ENOSF1 subfamily. The cofactor is Mg(2+). Could be sumoylated.

The protein localises to the mitochondrion. It carries out the reaction L-fuconate = 2-dehydro-3-deoxy-L-fuconate + H2O. Functionally, plays a role in the catabolism of L-fucose, a sugar that is part of the carbohydrates that are attached to cellular glycoproteins. Catalyzes the dehydration of L-fuconate to 2-keto-3-deoxy-L-fuconate by the abstraction of the 2-proton to generate an enediolate intermediate that is stabilized by the magnesium ion. May down-regulate thymidylate synthase activity, possibly already at the RNA level, by promoting the degradation of TYMS mRNA via an antisense RNA-based mechanism. In Pongo abelii (Sumatran orangutan), this protein is Mitochondrial enolase superfamily member 1 (ENOSF1).